The sequence spans 818 residues: Auxin response factor 12 (818 aa).

Residues 1–10 (MSSSSAASIG) are compositionally biased toward low complexity. The interval 1–24 (MSSSSAASIGPPQPPPPPAPPEEE) is disordered. Over residues 11 to 20 (PPQPPPPPAP) the composition is skewed to pro residues. Positions 135-237 (FCKTLTASDT…QLLLGIRRAS (103 aa)) form a DNA-binding region, TF-B3. Disordered stretches follow at residues 526-565 (NDQK…FSDP) and 629-648 (GSVL…NKIG). The segment covering 629-640 (GSVLHNSPTSKD) has biased composition (polar residues). The 85-residue stretch at 719-803 (RTFVKVYKSG…WYIKILSPED (85 aa)) folds into the PB1 domain.

The protein belongs to the ARF family. In terms of assembly, homodimers and heterodimers. Expressed in roots, culms, leaves and young panicles.

It localises to the nucleus. In terms of biological role, auxin response factors (ARFs) are transcriptional factors that bind specifically to the DNA sequence 5'-TGTCTC-3' found in the auxin-responsive promoter elements (AuxREs). The protein is Auxin response factor 12 (ARF12) of Oryza sativa subsp. japonica (Rice).